The sequence spans 365 residues: Coxsackievirus and adenovirus receptor homolog (365 aa).

Residues 1–19 (MALLLCFVLLCGVADFTSS) form the signal peptide. Ig-like C2-type domains follow at residues 20-136 (LSIT…FLLT) and 141-228 (PSGT…LRLD). At 20–238 (LSITTPEQRI…VVPPSNRAGT (219 aa)) the chain is on the extracellular side. 3 disulfide bridges follow: Cys-41-Cys-120, Cys-146-Cys-223, and Cys-162-Cys-212. Asn-106 carries N-linked (GlcNAc...) asparagine glycosylation. A helical membrane pass occupies residues 239-259 (IAGAVIGTLLALVLIGAILFC). S-palmitoyl cysteine attachment occurs at residues Cys-259 and Cys-260. Topologically, residues 260-365 (CHKKRREEKY…PAQSKDGSIV (106 aa)) are cytoplasmic. The span at 269 to 282 (YEKEVHHDIREDVP) shows a compositional bias: basic and acidic residues. The segment at 269 to 315 (YEKEVHHDIREDVPPPKSRTSTARSYIGSNHSSLGSMSPSNMEGYSK) is disordered. Over residues 286–315 (SRTSTARSYIGSNHSSLGSMSPSNMEGYSK) the composition is skewed to polar residues. 6 positions are modified to phosphoserine: Ser-297, Ser-304, Ser-306, Ser-323, Ser-332, and Ser-363. The PDZ-binding motif lies at 360–365 (KDGSIV).

As to quaternary structure, monomer. May form homodimer. Interacts with LNX, MAGI1, DLG4, PRKCABP, TJP1 and CTNNB1. Interacts with MPDZ; recruits MPDZ to intercellular contact sites. Interacts with JAML (homodimeric form). N-glycosylated. In terms of processing, palmitoylated on Cys-259 and/or Cys-260; required for proper localization to the plasma membrane. As to expression, expressed in heart, brain, spleen, lung, liver, muscle, kidney, testis, spleen and skeletal muscle.

Its subcellular location is the cell membrane. The protein resides in the basolateral cell membrane. It localises to the cell junction. The protein localises to the tight junction. It is found in the adherens junction. Component of the epithelial apical junction complex that may function as a homophilic cell adhesion molecule and is essential for tight junction integrity. Also involved in transepithelial migration of leukocytes through adhesive interactions with JAML a transmembrane protein of the plasma membrane of leukocytes. The interaction between both receptors also mediates the activation of gamma-delta T-cells, a subpopulation of T-cells residing in epithelia and involved in tissue homeostasis and repair. Upon epithelial CXADR-binding, JAML induces downstream cell signaling events in gamma-delta T-cells through PI3-kinase and MAP kinases. It results in proliferation and production of cytokines and growth factors by T-cells that in turn stimulate epithelial tissues repair. In Rattus norvegicus (Rat), this protein is Coxsackievirus and adenovirus receptor homolog (Cxadr).